Reading from the N-terminus, the 254-residue chain is Ribosomal RNA small subunit methyltransferase J (254 aa).

S-adenosyl-L-methionine-binding positions include 107–108, 123–124, and aspartate 174; these read RD and ER.

Belongs to the methyltransferase superfamily. RsmJ family.

It localises to the cytoplasm. The catalysed reaction is guanosine(1516) in 16S rRNA + S-adenosyl-L-methionine = N(2)-methylguanosine(1516) in 16S rRNA + S-adenosyl-L-homocysteine + H(+). In terms of biological role, specifically methylates the guanosine in position 1516 of 16S rRNA. The sequence is that of Ribosomal RNA small subunit methyltransferase J from Coxiella burnetii (strain Dugway 5J108-111).